A 490-amino-acid chain; its full sequence is Probable alcohol acetyltransferase FCK4 (490 aa).

It belongs to the alcohol acetyltransferase FCK4 family.

Its pathway is secondary metabolite biosynthesis. In terms of biological role, probable alcohol acetyltransferase; part of the gene cluster that mediates the biosynthesis of cytokinins such as fusatin, fusatinic acids or 8-oxofusatin, known for their growth promoting and anti-senescence activities toward host plants. FCK1 is a bifunctional enzyme that performs the first steps in the biosynthesis of Fusarium cytokinins. It first condenses adenosine monophosphate (AMP) with dimethylallyl diphosphate (DMAPP) to yield isoprenyl adenosine monophosphate. It then catalyzes the removal of the phosphoribose to produce isopentenylaldehyde. The cytochrome P450 monooxygenase then converts isopentenylaldehyde to trans-zeatin. A condensation step converts trans-zeatin to fusatin which is further modified to produce fusatinic acid. The mechanism for oxidation of fusatin to fusatinic acid remains unknown. 8-oxofusatin could be produced through several pathways, via direct oxygenation of fusatin, or via the 8-oxo-pentenyladenine intermediate which itself must arise from either the prenylation of 8-oxo-AMP by FCK1 and/or oxygenation of isopentenylaldehyde. Both the FCK3 and FCK4 enzymes act downstream of the identified cytokinins to produce yet unidentified compounds. The protein is Probable alcohol acetyltransferase FCK4 of Fusarium pseudograminearum (strain CS3096) (Wheat and barley crown-rot fungus).